The following is a 334-amino-acid chain: Heat-inducible transcription repressor HrcA (334 aa).

It belongs to the HrcA family.

Functionally, negative regulator of class I heat shock genes (grpE-dnaK-dnaJ and groELS operons). Prevents heat-shock induction of these operons. This is Heat-inducible transcription repressor HrcA from Bordetella bronchiseptica (strain ATCC BAA-588 / NCTC 13252 / RB50) (Alcaligenes bronchisepticus).